We begin with the raw amino-acid sequence, 343 residues long: Type II restriction enzyme BsuMI component YdiS (343 aa).

In terms of assembly, bsuMI restriction activity requires YdiR, YdiS and YdjA.

The enzyme catalyses Endonucleolytic cleavage of DNA to give specific double-stranded fragments with terminal 5'-phosphates.. A P subtype restriction enzyme that recognizes the double-stranded sequence 5'-CTCGAG-3'; the cleavage site is unknown. This Bacillus subtilis (strain 168) protein is Type II restriction enzyme BsuMI component YdiS (ydiS).